A 162-amino-acid polypeptide reads, in one-letter code: Flagellar assembly factor FliW (162 aa).

It belongs to the FliW family. As to quaternary structure, interacts with translational regulator CsrA and flagellin(s).

Its subcellular location is the cytoplasm. Functionally, acts as an anti-CsrA protein, binds CsrA and prevents it from repressing translation of its target genes, one of which is flagellin. Binds to flagellin and participates in the assembly of the flagellum. This chain is Flagellar assembly factor FliW, found in Alkaliphilus metalliredigens (strain QYMF).